Consider the following 84-residue polypeptide: Small ribosomal subunit protein bS16 (84 aa).

This sequence belongs to the bacterial ribosomal protein bS16 family.

This Dechloromonas aromatica (strain RCB) protein is Small ribosomal subunit protein bS16.